Reading from the N-terminus, the 281-residue chain is Phytanoyl-CoA dioxygenase 1 (281 aa).

Residues Lys98, Met137, 152-154 (HQD), and Trp169 contribute to the 2-oxoglutarate site. Residues His152 and Asp154 each contribute to the Fe cation site. Residue His237 participates in Fe cation binding. The 2-oxoglutarate site is built by Ser239 and Arg248.

Belongs to the PhyH family. Fe cation serves as cofactor. The cofactor is L-ascorbate.

It catalyses the reaction phytanoyl-CoA + 2-oxoglutarate + O2 = 2-hydroxyphytanoyl-CoA + succinate + CO2. The protein operates within lipid metabolism; fatty acid metabolism. Functionally, converts phytanoyl-CoA to 2-hydroxyphytanoyl-CoA. The sequence is that of Phytanoyl-CoA dioxygenase 1 from Oryza sativa subsp. japonica (Rice).